The sequence spans 448 residues: Potassium/proton antiporter CemA (448 aa).

4 helical membrane-spanning segments follow: residues 224 to 244 (ALAS…ISML), 325 to 345 (IILH…LFII), 373 to 393 (ILLL…EIVI), and 408 to 428 (IISC…KYWI).

It belongs to the CemA family.

Its subcellular location is the plastid. The protein resides in the chloroplast inner membrane. The catalysed reaction is K(+)(in) + H(+)(out) = K(+)(out) + H(+)(in). Its function is as follows. Contributes to K(+)/H(+) antiport activity by supporting proton efflux to control proton extrusion and homeostasis in chloroplasts in a light-dependent manner to modulate photosynthesis. Prevents excessive induction of non-photochemical quenching (NPQ) under continuous-light conditions. Indirectly promotes efficient inorganic carbon uptake into chloroplasts. The chain is Potassium/proton antiporter CemA from Angiopteris evecta (Mule's foot fern).